The sequence spans 566 residues: OTU domain-containing protein 5 (566 aa).

Disordered stretches follow at residues Met-1–Leu-117 and Gly-145–Tyr-175. Residues Pro-11–Pro-30 are compositionally biased toward pro residues. Residues Ala-34–Gly-47 are compositionally biased toward gly residues. The span at Ala-63 to Pro-75 shows a compositional bias: pro residues. Residue Ser-64 is modified to Phosphoserine. The segment covering Ala-84–Gln-97 has biased composition (low complexity). Gly residues predominate over residues Gly-105–Asp-115. Ser-165 carries the post-translational modification Phosphoserine. Tyr-175 carries the post-translational modification Phosphotyrosine. Ser-177 is subject to Phosphoserine. The residue at position 195 (Thr-195) is a Phosphothreonine. The region spanning Phe-213–Pro-336 is the OTU domain. The segment at Met-218 to Cys-224 is cys-loop. Residue Asp-221 is part of the active site. The active-site Nucleophile is Cys-224. The segment at Lys-273–Ile-283 is variable-loop. Phosphoserine is present on Ser-323. A his-loop region spans residues Tyr-324 to His-329. Residue His-329 is part of the active site. Residues Ser-332 and Ser-370 each carry the phosphoserine modification. Residues Ala-413 to Asp-499 are disordered. Composition is skewed to low complexity over residues Ala-425 to Ser-438 and Ser-445 to Pro-457. A Phosphoserine modification is found at Ser-447. Thr-502 is modified (phosphothreonine). Residue Ser-503 is modified to Phosphoserine.

It belongs to the peptidase C85 family. In terms of assembly, interacts with TRAF3. Post-translationally, phosphorylation at Ser-177 is required for deubiquitinating activity. Phosphorylation at Ser-323, Ser-332 and Ser-503 by MTOR promotes its activity.

It localises to the nucleus. It catalyses the reaction Thiol-dependent hydrolysis of ester, thioester, amide, peptide and isopeptide bonds formed by the C-terminal Gly of ubiquitin (a 76-residue protein attached to proteins as an intracellular targeting signal).. Its activity is regulated as follows. Inhibited by N-ethyl-maleimide (NEM). Functionally, deubiquitinating enzyme that functions as a negative regulator of the innate immune system. Has peptidase activity towards 'Lys-48'- and 'Lys-63'-linked polyubiquitin chains. Can also cleave 'Lys-11'-linked ubiquitin chains (in vitro). Acts via TRAF3 deubiquitination and subsequent suppression of type I interferon (IFN) production. Controls neuroectodermal differentiation through cleaving 'Lys-48'-linked ubiquitin chains to counteract degradation of select chromatin regulators such as ARID1A, HDAC2 and HCF1. Acts as a positive regulator of mTORC1 and mTORC2 signaling following phosphorylation by MTOR: acts by mediating deubiquitination of BTRC, leading to its stability. The polypeptide is OTU domain-containing protein 5 (Mus musculus (Mouse)).